A 128-amino-acid polypeptide reads, in one-letter code: Probable 4-amino-4-deoxy-L-arabinose-phosphoundecaprenol flippase subunit ArnF (128 aa).

Topologically, residues M1–G2 are cytoplasmic. A helical transmembrane segment spans residues L3–A23. Over A24–D35 the chain is Periplasmic. Residues F36–G56 form a helical membrane-spanning segment. The Cytoplasmic segment spans residues Y57 to A76. The helical transmembrane segment at Y77–W97 threads the bilayer. Over E98–T100 the chain is Periplasmic. Residues F101 to L121 traverse the membrane as a helical segment. Residues P122 to Y128 lie on the Cytoplasmic side of the membrane.

Belongs to the ArnF family. As to quaternary structure, heterodimer of ArnE and ArnF.

The protein localises to the cell inner membrane. Its pathway is bacterial outer membrane biogenesis; lipopolysaccharide biosynthesis. Translocates 4-amino-4-deoxy-L-arabinose-phosphoundecaprenol (alpha-L-Ara4N-phosphoundecaprenol) from the cytoplasmic to the periplasmic side of the inner membrane. The protein is Probable 4-amino-4-deoxy-L-arabinose-phosphoundecaprenol flippase subunit ArnF of Escherichia coli O9:H4 (strain HS).